A 249-amino-acid chain; its full sequence is MRGYFIAGNWKMHKTCAEAVALAQELVRELRGGPHTYMIAPSFTALDAVGKVLRGSNVLLGAQDVSSEEWGAHTGEVSVLQLEDLGVQVVIVGHSERRHGRGENDKLINQKVRRVLESGLRVILCVGERLQEYEAGCTNEVVGTQVRAGMADVCGSLMHNVTVAYEPVWAIGTGKTATPAQANAVHAHIRSVVREMYGAAIAEALCIQYGGSMKAENARALLAEEHIDGGLIGGASLEAASFVPIARSV.

A substrate-binding site is contributed by Asn-9–Lys-11. His-94 functions as the Electrophile in the catalytic mechanism. Glu-166 acts as the Proton acceptor in catalysis. Residues Gly-172, Ser-212, and Gly-233 to Gly-234 each bind substrate.

It belongs to the triosephosphate isomerase family. Homodimer.

It is found in the cytoplasm. It carries out the reaction D-glyceraldehyde 3-phosphate = dihydroxyacetone phosphate. It functions in the pathway carbohydrate biosynthesis; gluconeogenesis. The protein operates within carbohydrate degradation; glycolysis; D-glyceraldehyde 3-phosphate from glycerone phosphate: step 1/1. Its function is as follows. Involved in the gluconeogenesis. Catalyzes stereospecifically the conversion of dihydroxyacetone phosphate (DHAP) to D-glyceraldehyde-3-phosphate (G3P). The protein is Triosephosphate isomerase of Treponema pallidum (strain Nichols).